Here is a 101-residue protein sequence, read N- to C-terminus: Small ribosomal subunit protein uS14A (101 aa).

The interval 31 to 59 is disordered; it reads IRSPASSPEQRVAAQSELNRQPRDASAVR.

It belongs to the universal ribosomal protein uS14 family. As to quaternary structure, part of the 30S ribosomal subunit. Contacts proteins S3 and S10.

Its function is as follows. Binds 16S rRNA, required for the assembly of 30S particles and may also be responsible for determining the conformation of the 16S rRNA at the A site. In Mycobacteroides abscessus (strain ATCC 19977 / DSM 44196 / CCUG 20993 / CIP 104536 / JCM 13569 / NCTC 13031 / TMC 1543 / L948) (Mycobacterium abscessus), this protein is Small ribosomal subunit protein uS14A.